Here is a 425-residue protein sequence, read N- to C-terminus: Protein let-756 (425 aa).

Disordered stretches follow at residues 277–298 and 314–425; these read LEEK…LRKE and EEEL…QRYP. Positions 281–291 are enriched in basic residues; that stretch reads KRRREKKKRRR. Residues 329 to 340 are compositionally biased toward polar residues; it reads ASTQTRYNRPQN. The segment covering 378 to 389 has biased composition (basic residues); the sequence is HNSHHHHHHHPR. The span at 395–425 shows a compositional bias: polar residues; that stretch reads DPQQRHQSQQHYLAQTVSNPNRQNVNYQRYP.

It belongs to the heparin-binding growth factors family. As to quaternary structure, interacts with pal-1. In terms of tissue distribution, expressed in pharynx, CAN neuron and body wall muscles.

Its subcellular location is the nucleus. It is found in the membrane. Functionally, required for larval development. Probably by binding receptor egl-15, negatively regulates membrane protrusion from body wall muscles during larval development. The sequence is that of Protein let-756 (let-756) from Caenorhabditis elegans.